The sequence spans 223 residues: Glycoprotein 42 (223 aa).

At Met-1–Arg-8 the chain is on the intravirion side. A helical transmembrane segment spans residues Val-9–Pro-29. At Arg-30–Ser-223 the chain is on the virion surface side. Disulfide bonds link Cys-99/Cys-138, Cys-102/Cys-115, Cys-128/Cys-214, Cys-132/Cys-216, and Cys-192/Cys-208. Residues Tyr-111–Val-217 enclose the C-type lectin domain.

Belongs to the epstein barr virus gp42 family. In terms of assembly, forms a complex with gp25 and gp85 via its N-terminus; this complex is used for invasion of B-lymphocytes. Interacts with human HLA-DRA and HLA-DRB1.

It localises to the virion membrane. The protein resides in the host membrane. Functionally, plays a role in virion attachment to host B-lymphocytes, through binding to leukocyte antigen (HLA) class II and subsequently participates in fusion of the virion with host membranes. May act as a tropism switch that directs fusion with B-lymphocytes and inhibits fusion with epithelial cells. Additionally, hampers T-cell recognition via HLA class II molecules through steric hindrance of T-cell receptor-class II-peptide interaction. In terms of biological role, soluble gp42 inhibits HLA class II-restricted antigen presentation to T-cells through binding to immature and mature HLA class II complexes. The sequence is that of Glycoprotein 42 from Epstein-Barr virus (strain B95-8) (HHV-4).